Consider the following 85-residue polypeptide: Cell division topological specificity factor (85 aa).

This sequence belongs to the MinE family.

In terms of biological role, prevents the cell division inhibition by proteins MinC and MinD at internal division sites while permitting inhibition at polar sites. This ensures cell division at the proper site by restricting the formation of a division septum at the midpoint of the long axis of the cell. This is Cell division topological specificity factor from Xanthomonas euvesicatoria pv. vesicatoria (strain 85-10) (Xanthomonas campestris pv. vesicatoria).